Reading from the N-terminus, the 172-residue chain is Peptide methionine sulfoxide reductase MsrA (172 aa).

Cys-12 is an active-site residue.

This sequence belongs to the MsrA Met sulfoxide reductase family.

The enzyme catalyses L-methionyl-[protein] + [thioredoxin]-disulfide + H2O = L-methionyl-(S)-S-oxide-[protein] + [thioredoxin]-dithiol. It carries out the reaction [thioredoxin]-disulfide + L-methionine + H2O = L-methionine (S)-S-oxide + [thioredoxin]-dithiol. In terms of biological role, has an important function as a repair enzyme for proteins that have been inactivated by oxidation. Catalyzes the reversible oxidation-reduction of methionine sulfoxide in proteins to methionine. This Ligilactobacillus salivarius (strain UCC118) (Lactobacillus salivarius) protein is Peptide methionine sulfoxide reductase MsrA.